The following is a 388-amino-acid chain: Chorismate synthase (388 aa).

Arginine 39 and arginine 45 together coordinate NADP(+). FMN contacts are provided by residues 130 to 132, 251 to 252, glycine 296, 311 to 315, and arginine 337; these read RSS, NA, and KPIPT.

It belongs to the chorismate synthase family. Homotetramer. The cofactor is FMNH2.

It catalyses the reaction 5-O-(1-carboxyvinyl)-3-phosphoshikimate = chorismate + phosphate. It participates in metabolic intermediate biosynthesis; chorismate biosynthesis; chorismate from D-erythrose 4-phosphate and phosphoenolpyruvate: step 7/7. Catalyzes the anti-1,4-elimination of the C-3 phosphate and the C-6 proR hydrogen from 5-enolpyruvylshikimate-3-phosphate (EPSP) to yield chorismate, which is the branch point compound that serves as the starting substrate for the three terminal pathways of aromatic amino acid biosynthesis. This reaction introduces a second double bond into the aromatic ring system. The sequence is that of Chorismate synthase from Streptococcus pyogenes serotype M6 (strain ATCC BAA-946 / MGAS10394).